Here is a 765-residue protein sequence, read N- to C-terminus: Complement factor B (765 aa).

The N-terminal stretch at 1 to 25 (MGSNRCPRLGLVPLILGLLSGGVSM) is a signal peptide. Sushi domains are found at residues 35-100 (SPCS…ECKA), 101-160 (IRCP…ICDD), and 163-220 (GYCP…SCQD). 6 disulfide bridges follow: cysteine 37–cysteine 76, cysteine 62–cysteine 98, cysteine 103–cysteine 145, cysteine 131–cysteine 158, cysteine 165–cysteine 205, and cysteine 191–cysteine 218. N-linked (GlcNAc...) asparagine glycans are attached at residues asparagine 122 and asparagine 142. In terms of domain architecture, VWFA spans 270–469 (NIYLVLDGSD…NLEDVFFQML (200 aa)). The Mg(2+) site is built by serine 278 and serine 280. N-linked (GlcNAc...) asparagine glycosylation is present at asparagine 285. Threonine 353 is a Mg(2+) binding site. N-linked (GlcNAc...) asparagine glycosylation is present at asparagine 378. In terms of domain architecture, Peptidase S1 spans 477 to 758 (LCGMVWEHKD…VLPWLKEKLK (282 aa)). 5 disulfides stabilise this stretch: cysteine 478–cysteine 596, cysteine 511–cysteine 527, cysteine 599–cysteine 615, cysteine 660–cysteine 686, and cysteine 699–cysteine 729. Residues histidine 526 and aspartate 576 each act as charge relay system in the active site. The Charge relay system role is filled by serine 703.

This sequence belongs to the peptidase S1 family. As to quaternary structure, monomer. Interacts with complement C3b; this interaction is dependent on the presence of Mg(2+). In terms of assembly, catalytic component of the C3 convertase of the alternative complement pathway, also named C3bBb, composed of complement factor B Bb and complement C3b. Catalytic component of the C5 convertase of the alternative complement pathway, also named C3bBb3b, composed of complement factor B Bb and additional molecules of complement C3b. Interacts to CFP; this interaction contributes to the stabilization of the active C3-convertase enzyme complex. Mg(2+) is required as a cofactor. Mn(2+) serves as cofactor. In terms of processing, cleaved by CFD following activation of the alternative complement system, generating Ba and Bb chains. Cleavage and activation takes place when CFB is already associated with complement C3b.

It localises to the secreted. The protein resides in the cell surface. It catalyses the reaction Cleavage of Arg-|-Ser bond in complement component C3 alpha-chain to yield C3a and C3b, and Arg-|-Xaa bond in complement component C5 alpha-chain to yield C5a and C5b.. Functionally, precursor of the catalytic component of the C3 and C5 convertase complexes of the alternative pathway of the complement system, a cascade of proteins that leads to phagocytosis and breakdown of pathogens and signaling that strengthens the adaptive immune system. The alternative complement pathway acts as an amplification loop that enhances other complement pathways (classical, lectin and GZMK) by promoting formation of additional C3 and C5 convertases. CFB is cleaved and activated by CFD to generate Ba and Bb chains; Bb chain constituting the catalytic component of the C3 and C5 convertases. In terms of biological role, serine protease component of the complement C3 and C5 convertase complexes of the alternative complement pathway. Following cleavage and activation by factor D (CFD), forms the C3 convertase together with complement C3b. As part of the C3 convertase, cleaves and activates C3 into C3a anaphylatoxin and C3b opsonin, the next components of the complement pathways. When an additional complement C3b molecule binds to the C3 convertase, forms the C5 convertase, which cleaves and activates C5 into C5a anaphylatoxin and C5b component of the membrane attack complex. Its function is as follows. Involved in proliferation and differentiation of preactivated B-lymphocytes, rapid spreading of peripheral blood monocytes, stimulation of lymphocyte blastogenesis and lysis of erythrocytes. This is Complement factor B (CFB) from Sus scrofa (Pig).